The primary structure comprises 187 residues: UPF0301 protein lpl0620 (187 aa).

The protein belongs to the UPF0301 (AlgH) family.

The chain is UPF0301 protein lpl0620 from Legionella pneumophila (strain Lens).